The following is a 414-amino-acid chain: Histidine--tRNA ligase (414 aa).

Belongs to the class-II aminoacyl-tRNA synthetase family. As to quaternary structure, homodimer.

The protein localises to the cytoplasm. The catalysed reaction is tRNA(His) + L-histidine + ATP = L-histidyl-tRNA(His) + AMP + diphosphate + H(+). In Mycoplasma genitalium (strain ATCC 33530 / DSM 19775 / NCTC 10195 / G37) (Mycoplasmoides genitalium), this protein is Histidine--tRNA ligase (hisS).